We begin with the raw amino-acid sequence, 200 residues long: MALQETIEQTVTGLGYELVEIERTGGGLLRVTIDMPYVSGAEQFINAEDCEKVTRQLQFVLEVEGADYSRLEVSSPGIDRPLRNEKDFERFAGELVDITLKAPIGVAASAGSAVSANRKKFRGTLERAAPKDGVAGWQIVWSDEPPVKPGQKVSKKKLPAPLQALGFTLDEIHQARLAPVVDFKGRKPKIVPGADKSSEK.

The protein belongs to the RimP family.

Its subcellular location is the cytoplasm. In terms of biological role, required for maturation of 30S ribosomal subunits. The chain is Ribosome maturation factor RimP from Polaromonas sp. (strain JS666 / ATCC BAA-500).